The sequence spans 147 residues: Lysozyme C (147 aa).

Positions 1-18 (MKFFLILGFCLLPLIAQG) are cleaved as a signal peptide. In terms of domain architecture, C-type lysozyme spans 19–147 (KVFQRCELAA…VSQWIRGCRV (129 aa)). Cystine bridges form between cysteine 24–cysteine 145, cysteine 48–cysteine 133, cysteine 82–cysteine 98, and cysteine 94–cysteine 112. Residues glutamate 53 and aspartate 70 contribute to the active site. Aspartate 119 serves as a coordination point for substrate.

Belongs to the glycosyl hydrolase 22 family. Monomer. As to expression, expressed in liver and ovary. Not expressed in bone marrow, lung, spleen, intestine or oviduct.

The protein localises to the secreted. It catalyses the reaction Hydrolysis of (1-&gt;4)-beta-linkages between N-acetylmuramic acid and N-acetyl-D-glucosamine residues in a peptidoglycan and between N-acetyl-D-glucosamine residues in chitodextrins.. Lysozymes have primarily a bacteriolytic function; those in tissues and body fluids are associated with the monocyte-macrophage system and enhance the activity of immunoagents. Has bacteriolytic activity against M.luteus. This chain is Lysozyme C, found in Dromaius novaehollandiae (Emu).